A 376-amino-acid polypeptide reads, in one-letter code: Chaperone protein DnaJ (376 aa).

The 66-residue stretch at 5 to 70 (DYYEVLGVAR…NKRRMYDSHG (66 aa)) folds into the J domain. The segment at 132–209 (GVERRIEIPT…CHGNGRVEED (78 aa)) adopts a CR-type zinc-finger fold. Zn(2+) is bound by residues cysteine 145, cysteine 148, cysteine 161, cysteine 164, cysteine 183, cysteine 186, cysteine 197, and cysteine 200. CXXCXGXG motif repeat units follow at residues 145 to 152 (CGDCDGSG), 161 to 168 (CNVCHGRG), 183 to 190 (CHNCGGRG), and 197 to 204 (CKTCHGNG). Residues 223–242 (GDRIRLSGEGEAGPAGTPPG) are disordered.

The protein belongs to the DnaJ family. In terms of assembly, homodimer. Zn(2+) serves as cofactor.

The protein resides in the cytoplasm. Participates actively in the response to hyperosmotic and heat shock by preventing the aggregation of stress-denatured proteins and by disaggregating proteins, also in an autonomous, DnaK-independent fashion. Unfolded proteins bind initially to DnaJ; upon interaction with the DnaJ-bound protein, DnaK hydrolyzes its bound ATP, resulting in the formation of a stable complex. GrpE releases ADP from DnaK; ATP binding to DnaK triggers the release of the substrate protein, thus completing the reaction cycle. Several rounds of ATP-dependent interactions between DnaJ, DnaK and GrpE are required for fully efficient folding. Also involved, together with DnaK and GrpE, in the DNA replication of plasmids through activation of initiation proteins. In Stenotrophomonas maltophilia (strain R551-3), this protein is Chaperone protein DnaJ.